We begin with the raw amino-acid sequence, 196 residues long: Pyridoxal 5'-phosphate synthase subunit PdxT (196 aa).

Residue 47-49 (GES) participates in L-glutamine binding. Cysteine 79 functions as the Nucleophile in the catalytic mechanism. Residues arginine 106 and 134–135 (IR) each bind L-glutamine. Active-site charge relay system residues include histidine 170 and glutamate 172.

This sequence belongs to the glutaminase PdxT/SNO family. In the presence of PdxS, forms a dodecamer of heterodimers. Only shows activity in the heterodimer.

It carries out the reaction aldehydo-D-ribose 5-phosphate + D-glyceraldehyde 3-phosphate + L-glutamine = pyridoxal 5'-phosphate + L-glutamate + phosphate + 3 H2O + H(+). It catalyses the reaction L-glutamine + H2O = L-glutamate + NH4(+). It participates in cofactor biosynthesis; pyridoxal 5'-phosphate biosynthesis. In terms of biological role, catalyzes the hydrolysis of glutamine to glutamate and ammonia as part of the biosynthesis of pyridoxal 5'-phosphate. The resulting ammonia molecule is channeled to the active site of PdxS. The polypeptide is Pyridoxal 5'-phosphate synthase subunit PdxT (Bacillus cereus (strain Q1)).